The chain runs to 128 residues: Large ribosomal subunit protein bL17 (128 aa).

This sequence belongs to the bacterial ribosomal protein bL17 family. In terms of assembly, part of the 50S ribosomal subunit. Contacts protein L32.

The protein is Large ribosomal subunit protein bL17 of Streptococcus uberis (strain ATCC BAA-854 / 0140J).